Consider the following 572-residue polypeptide: Proteinaceous RNase P 1, chloroplastic/mitochondrial (572 aa).

Residues 1-70 (MLRLTCFTPS…SRHLCTLPLA (70 aa)) constitute a chloroplast and mitochondrion transit peptide. PPR repeat units lie at residues 96–130 (PEAL…GVQL), 136–174 (NVLL…KVVP), 175–209 (NEAT…GIQP), and 210–244 (RLRS…EVVP). Residues 338 to 565 (MDENGVCKCC…DLQTSRQWLC (228 aa)) enclose the PRORP domain. Zn(2+)-binding residues include cysteine 344 and cysteine 347. Mn(2+) contacts are provided by aspartate 399, aspartate 474, aspartate 475, and aspartate 493. Histidine 548 and cysteine 565 together coordinate Zn(2+).

This sequence belongs to the PPR family. P subfamily. Mg(2+) serves as cofactor. Mn(2+) is required as a cofactor.

Its subcellular location is the mitochondrion. It is found in the plastid. The protein localises to the chloroplast. The catalysed reaction is Endonucleolytic cleavage of RNA, removing 5'-extranucleotides from tRNA precursor.. Its function is as follows. Endonuclease RNase P responsible for the 5' maturation of tRNA precursors. Preferentially cleaves at the unusual cleavage site, but also able to cleave at the classical cleavage site. Also involved in the maturation of mRNAs in mitochondria. This chain is Proteinaceous RNase P 1, chloroplastic/mitochondrial (PRORP1), found in Arabidopsis thaliana (Mouse-ear cress).